We begin with the raw amino-acid sequence, 399 residues long: Acetate kinase (399 aa).

Residue asparagine 10 coordinates Mg(2+). Lysine 17 contributes to the ATP binding site. Residue arginine 91 participates in substrate binding. Residue aspartate 148 is the Proton donor/acceptor of the active site. ATP-binding positions include histidine 208–glycine 212, aspartate 283–arginine 285, and glycine 331–asparagine 335. Glutamate 385 is a binding site for Mg(2+).

The protein belongs to the acetokinase family. Homodimer. Requires Mg(2+) as cofactor. Mn(2+) is required as a cofactor.

The protein localises to the cytoplasm. The catalysed reaction is acetate + ATP = acetyl phosphate + ADP. The protein operates within metabolic intermediate biosynthesis; acetyl-CoA biosynthesis; acetyl-CoA from acetate: step 1/2. Functionally, catalyzes the formation of acetyl phosphate from acetate and ATP. Can also catalyze the reverse reaction. This is Acetate kinase from Shewanella baltica (strain OS223).